A 188-amino-acid polypeptide reads, in one-letter code: Probable thiol:disulfide interchange protein DsbE-2 (188 aa).

Topologically, residues 1 to 11 (MSMLHQQKRKN) are cytoplasmic. Residues 12 to 32 (HFVFLPLVILLAVCALLFIGL) form a helical membrane-spanning segment. Over 33–188 (QQDPQKIASA…KLEAENAKVR (156 aa)) the chain is Periplasmic. In terms of domain architecture, Thioredoxin spans 42–179 (ALIGKPVPTF…QEMFIPEWQK (138 aa)). A disulfide bridge links C82 with C85.

The protein belongs to the thioredoxin family. DsbE subfamily.

It localises to the cell inner membrane. Its function is as follows. Could be involved in disulfide bond formation. Could catalyzes a late, reductive step in the assembly of periplasmic NrfA c-type cytochrome, probably the reduction of disulfide bonds of the apocytochrome c to allow covalent linkage with the heme. Possible subunit of a heme lyase. The chain is Probable thiol:disulfide interchange protein DsbE-2 (nrfX) from Pasteurella multocida (strain Pm70).